Reading from the N-terminus, the 262-residue chain is Phosphonates import ATP-binding protein PhnC (262 aa).

The ABC transporter domain occupies 5–253 (IRVEKLAKTF…RFDHLYRSIN (249 aa)). An ATP-binding site is contributed by 37–44 (GPSGSGKS).

This sequence belongs to the ABC transporter superfamily. Phosphonates importer (TC 3.A.1.9.1) family. As to quaternary structure, the complex is composed of two ATP-binding proteins (PhnC), two transmembrane proteins (PhnE) and a solute-binding protein (PhnD).

It is found in the cell inner membrane. It carries out the reaction phosphonate(out) + ATP + H2O = phosphonate(in) + ADP + phosphate + H(+). Its function is as follows. Part of the ABC transporter complex PhnCDE involved in phosphonates, phosphate esters, phosphite and phosphate import. Responsible for energy coupling to the transport system. This Escherichia coli (strain K12) protein is Phosphonates import ATP-binding protein PhnC.